Consider the following 488-residue polypeptide: UDP-N-acetylmuramate--L-alanine ligase (488 aa).

129-135 lines the ATP pocket; that stretch reads GSHGKTT.

This sequence belongs to the MurCDEF family.

The protein localises to the cytoplasm. It catalyses the reaction UDP-N-acetyl-alpha-D-muramate + L-alanine + ATP = UDP-N-acetyl-alpha-D-muramoyl-L-alanine + ADP + phosphate + H(+). It participates in cell wall biogenesis; peptidoglycan biosynthesis. Its function is as follows. Cell wall formation. The sequence is that of UDP-N-acetylmuramate--L-alanine ligase from Prochlorococcus marinus (strain MIT 9313).